Here is a 637-residue protein sequence, read N- to C-terminus: Limonene synthase, chloroplastic (637 aa).

The N-terminal 56 residues, 1–56 (MALLSIVSLQVPKSCGLKSLISSSNVQKALCISTAVPTLRMRRRQKALVINMKLTT), are a transit peptide targeting the chloroplast. Residues D388, D392, and D540 each coordinate Mg(2+). Residues 388–392 (DDIYD) carry the DDXXD motif motif.

Belongs to the terpene synthase family. Tpsd subfamily. Requires Mg(2+) as cofactor. Mn(2+) serves as cofactor. The cofactor is K(+).

It localises to the plastid. Its subcellular location is the chloroplast. It catalyses the reaction (2E)-geranyl diphosphate = (4S)-limonene + diphosphate. The protein operates within terpene metabolism; oleoresin biosynthesis. Its function is as follows. Involved in defensive oleoresin formation in conifers in response to insect attack or other injury. Involved in monoterpene (C10) olefins biosynthesis. The polypeptide is Limonene synthase, chloroplastic (ag10) (Abies grandis (Grand fir)).